Reading from the N-terminus, the 250-residue chain is Anti-Pycsar protein Apyc1 (250 aa).

Residues 19–220 (YNNNALVKCN…AVQEMIMLMH (202 aa)) are beta-lactamase-like. Histidine 61, histidine 63, aspartate 65, histidine 66, histidine 146, aspartate 166, and histidine 220 together coordinate Zn(2+).

Belongs to the anti-Pycsar protein Apyc1 family. In terms of assembly, homodimer. Requires Zn(2+) as cofactor.

The catalysed reaction is 3',5'-cyclic CMP + H2O = CMP + H(+). The enzyme catalyses 3',5'-cyclic UMP + H2O = UMP + H(+). Functionally, counteracts the endogenous Pycsar antiviral defense system. Phosphodiesterase that enables metal-dependent hydrolysis of host cyclic nucleotide Pycsar defense signals such as cCMP and cUMP. The sequence is that of Anti-Pycsar protein Apyc1 from Paenibacillus xerothermodurans.